The following is a 65-amino-acid chain: Potassium channel toxin kappa-KTx 2.6 (65 aa).

The first 27 residues, 1–27 (MKTSKMICAFLLVLVVGTFNDISGAYG), serve as a signal peptide directing secretion. Residues 28-39 (EYVEDQHSFKIE) constitute a propeptide that is removed on maturation. 2 disulfides stabilise this stretch: cysteine 45–cysteine 63 and cysteine 49–cysteine 59.

Belongs to the short scorpion toxin superfamily. Potassium channel inhibitor kappa-KTx family. Kappa-KTx 2 subfamily. As to expression, expressed by the venom gland.

The protein resides in the secreted. Potassium channel inhibitor (Kv). The protein is Potassium channel toxin kappa-KTx 2.6 of Opisthacanthus cayaporum (South American scorpion).